The sequence spans 220 residues: Nitrile hydratase subunit beta (220 aa).

Belongs to the nitrile hydratase subunit beta family. As to quaternary structure, heterodimer of an alpha and a beta chain.

It carries out the reaction an aliphatic primary amide = an aliphatic nitrile + H2O. Its function is as follows. NHase catalyzes the hydration of various nitrile compounds to the corresponding amides. In Pseudomonas chlororaphis (Pseudomonas aureofaciens), this protein is Nitrile hydratase subunit beta (nthB).